A 110-amino-acid chain; its full sequence is Membrane-associated protein slr1513 (110 aa).

The protein resides in the cellular thylakoid membrane. The protein localises to the cell membrane. The protein is Membrane-associated protein slr1513 of Synechocystis sp. (strain ATCC 27184 / PCC 6803 / Kazusa).